The primary structure comprises 184 residues: Calmodulin-related protein (184 aa).

EF-hand domains follow at residues 8 to 43 (DQISEFKEAFSLFDKDGDGCITTKELGTVMRSLGQN), 44 to 79 (PTEAELQDMINEVDADGNGTIDFPEFLNLMARKMKD), 81 to 116 (DSEEELKEAFRVFDKDQNGFISAAELRHVMTNLGEK), and 117 to 152 (LTDEEVDEMIREADVDGDGQINYEEFVKVMMANRRR). Positions 21, 23, 25, 27, 32, 57, 59, 61, 63, 68, 94, 96, 98, and 105 each coordinate Ca(2+). At K116 the chain carries N6,N6,N6-trimethyllysine. Residues D130, D132, D134, Q136, and E141 each coordinate Ca(2+). The tract at residues 156 to 184 (EESKRSVNSNISRSNNGRKVRKRDRCTIL) is disordered. Low complexity predominate over residues 161–170 (SVNSNISRSN). The segment covering 171-184 (NGRKVRKRDRCTIL) has biased composition (basic residues).

It belongs to the calmodulin family.

Its function is as follows. Calmodulin mediates the control of a large number of enzymes, ion channels and other proteins by Ca(2+). Among the enzymes to be stimulated by the calmodulin-Ca(2+) complex are a number of protein kinases and phosphatases. This Petunia hybrida (Petunia) protein is Calmodulin-related protein (CAM53).